The following is a 62-amino-acid chain: FCYLPDDPGVCKAHIPRFYYNPASNKCKNFIYGGCGGNANNFETRAECRHTCVASGKGGPRP.

One can recognise a BPTI/Kunitz inhibitor domain in the interval 2–52 (CYLPDDPGVCKAHIPRFYYNPASNKCKNFIYGGCGGNANNFETRAECRHTC). 3 disulfide bridges follow: C2/C52, C11/C35, and C27/C48.

Belongs to the venom Kunitz-type family. Expressed by the venom gland.

It localises to the secreted. Its function is as follows. Serine protease inhibitor that inhibits trypsin. The recombinant protein also barely blocks voltage-gated potassium channel Kv1.3/KCNA3 (3.70% inhibition at 60 nM of toxin). The protein is Kunitz-type serine protease inhibitor of Eristicophis macmahoni (Leaf-nosed viper).